The sequence spans 418 residues: Serine hydroxymethyltransferase (418 aa).

Residues leucine 121 and 125–127 (GHL) each bind (6S)-5,6,7,8-tetrahydrofolate. Residue lysine 230 is modified to N6-(pyridoxal phosphate)lysine. 356–358 (SPF) contacts (6S)-5,6,7,8-tetrahydrofolate.

It belongs to the SHMT family. As to quaternary structure, homodimer. It depends on pyridoxal 5'-phosphate as a cofactor.

Its subcellular location is the cytoplasm. The enzyme catalyses (6R)-5,10-methylene-5,6,7,8-tetrahydrofolate + glycine + H2O = (6S)-5,6,7,8-tetrahydrofolate + L-serine. It participates in one-carbon metabolism; tetrahydrofolate interconversion. It functions in the pathway amino-acid biosynthesis; glycine biosynthesis; glycine from L-serine: step 1/1. In terms of biological role, catalyzes the reversible interconversion of serine and glycine with tetrahydrofolate (THF) serving as the one-carbon carrier. This reaction serves as the major source of one-carbon groups required for the biosynthesis of purines, thymidylate, methionine, and other important biomolecules. Also exhibits THF-independent aldolase activity toward beta-hydroxyamino acids, producing glycine and aldehydes, via a retro-aldol mechanism. The sequence is that of Serine hydroxymethyltransferase from Pseudoalteromonas atlantica (strain T6c / ATCC BAA-1087).